The sequence spans 106 residues: UPF0060 membrane protein Oant_2511 (106 aa).

4 helical membrane passes run 3–23 (FAIYAAAALFEIAGCFAFWAW), 30–50 (PLWLAPGMVCLALFAYLLTLI), 60–80 (AAYGGIYIIASILWIWFAEGA), and 84–104 (RWDVVGACTAFAGTCIILFAP).

The protein belongs to the UPF0060 family.

The protein localises to the cell inner membrane. This Brucella anthropi (strain ATCC 49188 / DSM 6882 / CCUG 24695 / JCM 21032 / LMG 3331 / NBRC 15819 / NCTC 12168 / Alc 37) (Ochrobactrum anthropi) protein is UPF0060 membrane protein Oant_2511.